The following is a 465-amino-acid chain: Glutathione reductase (465 aa).

FAD is bound by residues Ser-16 and Gly-17. Ser-16 lines the glutathione pocket. Residue Arg-23 participates in glutathione binding. FAD contacts are provided by Glu-42, Thr-49, Cys-50, and Lys-58. An intrachain disulfide couples Cys-50 to Cys-55. Tyr-108 contacts glutathione. Position 124 (Gly-124) interacts with FAD. 6 residues coordinate NADP(+): Ala-187, Ile-190, Glu-193, Arg-210, Arg-216, and Gly-276. Asp-318 contributes to the FAD binding site. Residue Leu-324 participates in NADP(+) binding. FAD is bound at residue Thr-326. Arg-334 contacts glutathione. Val-357 contributes to the NADP(+) binding site. His-454 serves as a coordination point for FAD. His-454 acts as the Proton acceptor in catalysis.

This sequence belongs to the class-I pyridine nucleotide-disulfide oxidoreductase family. Requires FAD as cofactor.

It is found in the cytoplasm. The catalysed reaction is 2 glutathione + NADP(+) = glutathione disulfide + NADPH + H(+). In terms of biological role, catalyzes the reduction of glutathione disulfide (GSSG) to reduced glutathione (GSH). Constitutes the major mechanism to maintain a high GSH:GSSG ratio in the cytosol. The amount of GSH may affect the determination of cell fate. This Dictyostelium discoideum (Social amoeba) protein is Glutathione reductase (gsr).